The primary structure comprises 361 residues: Peptide chain release factor 1 (361 aa).

At Gln237 the chain carries N5-methylglutamine. Residues 283-307 (AQQQEQQEQQSSTRKELIGSGDRSQ) form a disordered region.

The protein belongs to the prokaryotic/mitochondrial release factor family. Methylated by PrmC. Methylation increases the termination efficiency of RF1.

The protein localises to the cytoplasm. In terms of biological role, peptide chain release factor 1 directs the termination of translation in response to the peptide chain termination codons UAG and UAA. This is Peptide chain release factor 1 from Vesicomyosocius okutanii subsp. Calyptogena okutanii (strain HA).